Consider the following 401-residue polypeptide: Tyrosine--tRNA ligase (401 aa).

Residues 42-51 (PTAPDIHLGH) carry the 'HIGH' region motif. Positions 226-230 (KMSKS) match the 'KMSKS' region motif. ATP is bound at residue K229. Positions 334-394 (MGLATLLKEA…GKRKFARVRL (61 aa)) constitute an S4 RNA-binding domain.

Belongs to the class-I aminoacyl-tRNA synthetase family. TyrS type 2 subfamily. As to quaternary structure, homodimer.

The protein resides in the cytoplasm. The enzyme catalyses tRNA(Tyr) + L-tyrosine + ATP = L-tyrosyl-tRNA(Tyr) + AMP + diphosphate + H(+). In terms of biological role, catalyzes the attachment of tyrosine to tRNA(Tyr) in a two-step reaction: tyrosine is first activated by ATP to form Tyr-AMP and then transferred to the acceptor end of tRNA(Tyr). The polypeptide is Tyrosine--tRNA ligase (Haemophilus influenzae (strain ATCC 51907 / DSM 11121 / KW20 / Rd)).